The chain runs to 377 residues: Glutamate 5-kinase (377 aa).

Lysine 18 is a binding site for ATP. Substrate-binding residues include serine 55, aspartate 142, and asparagine 154. ATP contacts are provided by residues 174-175 and 216-222; these read SD and TGGMKSK. The 79-residue stretch at 281 to 359 folds into the PUA domain; sequence QGEVVVDAGA…REIEALLGYK (79 aa).

The protein belongs to the glutamate 5-kinase family.

It localises to the cytoplasm. It catalyses the reaction L-glutamate + ATP = L-glutamyl 5-phosphate + ADP. The protein operates within amino-acid biosynthesis; L-proline biosynthesis; L-glutamate 5-semialdehyde from L-glutamate: step 1/2. Its function is as follows. Catalyzes the transfer of a phosphate group to glutamate to form L-glutamate 5-phosphate. The chain is Glutamate 5-kinase from Meiothermus ruber.